The primary structure comprises 396 residues: Elongation factor Tu (396 aa).

In terms of domain architecture, tr-type G spans 10–206; the sequence is KPHCNIGTIG…TVDAYIPQPE (197 aa). Residues 19–26 are G1; sequence GHVDHGKT. Residue 19 to 26 coordinates GTP; the sequence is GHVDHGKT. Thr-26 provides a ligand contact to Mg(2+). The G2 stretch occupies residues 60–64; it reads GITIS. The tract at residues 81 to 84 is G3; sequence DCPG. Residues 81–85 and 136–139 each bind GTP; these read DCPGH and NKVD. The interval 136 to 139 is G4; the sequence is NKVD. The interval 174–176 is G5; it reads SAL.

Belongs to the TRAFAC class translation factor GTPase superfamily. Classic translation factor GTPase family. EF-Tu/EF-1A subfamily. As to quaternary structure, monomer.

It is found in the cytoplasm. The catalysed reaction is GTP + H2O = GDP + phosphate + H(+). Its function is as follows. GTP hydrolase that promotes the GTP-dependent binding of aminoacyl-tRNA to the A-site of ribosomes during protein biosynthesis. The chain is Elongation factor Tu from Methylocella silvestris (strain DSM 15510 / CIP 108128 / LMG 27833 / NCIMB 13906 / BL2).